The following is a 309-amino-acid chain: Protein FdhE (309 aa).

Belongs to the FdhE family.

It is found in the cytoplasm. Its function is as follows. Necessary for formate dehydrogenase activity. This is Protein FdhE from Salmonella typhimurium (strain LT2 / SGSC1412 / ATCC 700720).